The primary structure comprises 509 residues: GRAS family protein RAD1 (509 aa).

Residues 125-508 (EDGCADGMRL…KPIVAASCWK (384 aa)) enclose the GRAS domain. Positions 132 to 198 (MRLVQLLIAC…IQPIGSGAGV (67 aa)) are leucine repeat I (LRI). The segment at 217 to 286 (YRLVYETCPH…SGHGRVRRLR (70 aa)) is VHIID. The VHIID motif lies at 248-252 (VHVVD). The interval 299–331 (AIGDELSDYANNLGINLEFSVVQKNLENLQPED) is leucine repeat II (LRII). Residues 340–431 (LVVNSILQLH…QFYFAEEIKN (92 aa)) are PFYRE. The interval 434–508 (SCEGPLRMER…KPIVAASCWK (75 aa)) is SAW.

It belongs to the GRAS family. In terms of assembly, interacts with RAM1 and NSP2. In terms of tissue distribution, expressed in roots under low phosphate (Pi) conditions.

The protein resides in the nucleus. In terms of biological role, transcription factor acting as a regulator of arbuscular mycorrhiza (AM)-related genes (e.g. PT4, STR and RAM2). Required for the morphogenesis of arbuscules upon symbiosis with AM fungi (e.g. Rhizophagus irregularis). Also involved in restricting mycorrhizal colonization of the root meristem. The polypeptide is GRAS family protein RAD1 (Lotus japonicus (Lotus corniculatus var. japonicus)).